Consider the following 391-residue polypeptide: Phosphoglycerate kinase (391 aa).

Residues 21 to 23 (DMN), arginine 36, 59 to 62 (HLGR), arginine 113, and arginine 146 contribute to the substrate site. Residues lysine 197, glutamate 319, and 345-348 (GGDT) contribute to the ATP site.

It belongs to the phosphoglycerate kinase family. In terms of assembly, monomer.

It localises to the cytoplasm. It carries out the reaction (2R)-3-phosphoglycerate + ATP = (2R)-3-phospho-glyceroyl phosphate + ADP. It functions in the pathway carbohydrate degradation; glycolysis; pyruvate from D-glyceraldehyde 3-phosphate: step 2/5. The polypeptide is Phosphoglycerate kinase (Chromobacterium violaceum (strain ATCC 12472 / DSM 30191 / JCM 1249 / CCUG 213 / NBRC 12614 / NCIMB 9131 / NCTC 9757 / MK)).